A 45-amino-acid polypeptide reads, in one-letter code: Large ribosomal subunit protein bL34 (45 aa).

The protein belongs to the bacterial ribosomal protein bL34 family.

This is Large ribosomal subunit protein bL34 from Frankia casuarinae (strain DSM 45818 / CECT 9043 / HFP020203 / CcI3).